The following is a 197-amino-acid chain: Potassium-transporting ATPase KdpC subunit (197 aa).

A helical transmembrane segment spans residues 9-29 (LVVTLLLAALLCGAYPVLVTG).

It belongs to the KdpC family. The system is composed of three essential subunits: KdpA, KdpB and KdpC.

The protein resides in the cell inner membrane. Part of the high-affinity ATP-driven potassium transport (or Kdp) system, which catalyzes the hydrolysis of ATP coupled with the electrogenic transport of potassium into the cytoplasm. This subunit acts as a catalytic chaperone that increases the ATP-binding affinity of the ATP-hydrolyzing subunit KdpB by the formation of a transient KdpB/KdpC/ATP ternary complex. The protein is Potassium-transporting ATPase KdpC subunit of Nitratidesulfovibrio vulgaris (strain DSM 19637 / Miyazaki F) (Desulfovibrio vulgaris).